The following is a 702-amino-acid chain: Archaeal Lon protease (702 aa).

Positions 1–63 (MSNESTNDAP…VGVEGDVSID (63 aa)) are disordered. Residues 1–183 (MSNESTNDAP…EARKRNQMRS (183 aa)) lie on the Cytoplasmic side of the membrane. The segment covering 10 to 48 (PPDDDPDDPEPSVDHDDTDGLQDDPADSVDDAGEVDDLE) has biased composition (acidic residues). 117 to 124 (GSPGTGKS) is a binding site for ATP. The chain crosses the membrane as a helical span at residues 184–201 (FLMWIMILLAVGYALLIA). At 202 to 206 (TPARP) the chain is on the extracellular side. A helical transmembrane segment spans residues 207–223 (LLALLSAAGIYLLFRYT). Residues 224 to 702 (NRGSDAMVPK…GTTGGNPSPQ (479 aa)) are Cytoplasmic-facing. The 181-residue stretch at 487 to 667 (EEAVGRVNGL…SEVLDVALVG (181 aa)) folds into the Lon proteolytic domain. Residues Ser-574 and Lys-617 contribute to the active site.

This sequence belongs to the peptidase S16 family. Archaeal LonB subfamily. As to quaternary structure, homohexamer. Organized in a ring with a central cavity.

The protein localises to the cell membrane. In terms of biological role, ATP-dependent serine protease that mediates the selective degradation of mutant and abnormal proteins as well as certain short-lived regulatory proteins. Degrades polypeptides processively. In Halobacterium salinarum (strain ATCC 700922 / JCM 11081 / NRC-1) (Halobacterium halobium), this protein is Archaeal Lon protease.